Consider the following 662-residue polypeptide: UvrABC system protein B (662 aa).

In terms of domain architecture, Helicase ATP-binding spans Lys-25–Arg-182. Position 38–45 (Gly-38–Thr-45) interacts with ATP. The Beta-hairpin motif lies at Tyr-91 to Ile-114. The 167-residue stretch at Gln-429–Ile-595 folds into the Helicase C-terminal domain. The UVR domain occupies Asp-622–Asp-657.

The protein belongs to the UvrB family. Forms a heterotetramer with UvrA during the search for lesions. Interacts with UvrC in an incision complex.

It localises to the cytoplasm. The UvrABC repair system catalyzes the recognition and processing of DNA lesions. A damage recognition complex composed of 2 UvrA and 2 UvrB subunits scans DNA for abnormalities. Upon binding of the UvrA(2)B(2) complex to a putative damaged site, the DNA wraps around one UvrB monomer. DNA wrap is dependent on ATP binding by UvrB and probably causes local melting of the DNA helix, facilitating insertion of UvrB beta-hairpin between the DNA strands. Then UvrB probes one DNA strand for the presence of a lesion. If a lesion is found the UvrA subunits dissociate and the UvrB-DNA preincision complex is formed. This complex is subsequently bound by UvrC and the second UvrB is released. If no lesion is found, the DNA wraps around the other UvrB subunit that will check the other stand for damage. The chain is UvrABC system protein B from Clostridium botulinum (strain Loch Maree / Type A3).